The chain runs to 702 residues: Soluble guanylate cyclase gcy-31 (702 aa).

A heme-binding site is contributed by His104. A coiled-coil region spans residues 368-406 (TQQSAELKLLLHQEAQKSRNMRENMNRLKKERRRTDKLL). Residues 435–564 (TILFTDIVEF…ETVYVANKME (130 aa)) enclose the Guanylate cyclase domain. 2 residues coordinate Mg(2+): Asp440 and Asp484. The segment at 614–702 (RHGPHRVPSP…QDLTPRKSIT (89 aa)) is disordered. The segment covering 633-643 (SQTEDDDDDEL) has biased composition (acidic residues). Polar residues predominate over residues 683 to 695 (RNSNKTPRQSQDL).

The protein belongs to the adenylyl cyclase class-4/guanylyl cyclase family. As to quaternary structure, heterodimer; with other soluble guanylate cyclases. It depends on heme as a cofactor. As to expression, expressed in a pair of bilaterally symmetric neurons in the head.

It is found in the cytoplasm. It carries out the reaction GTP = 3',5'-cyclic GMP + diphosphate. Its activity is regulated as follows. May be regulated by molecular oxygen. Probably not activated by nitric oxide (NO). In terms of biological role, synthesizes cyclic GMP (cGMP) from GTP. May play a role in embryogenesis. The sequence is that of Soluble guanylate cyclase gcy-31 (gcy-31) from Caenorhabditis elegans.